A 109-amino-acid polypeptide reads, in one-letter code: DNA-directed RNA polymerase subunit I (109 aa).

It carries out the reaction RNA(n) + a ribonucleoside 5'-triphosphate = RNA(n+1) + diphosphate. Functionally, DNA-dependent RNA polymerase catalyzes the transcription of DNA into RNA using the four ribonucleoside triphosphates as substrates. The sequence is that of DNA-directed RNA polymerase subunit I (rpoI) from Methanocaldococcus jannaschii (strain ATCC 43067 / DSM 2661 / JAL-1 / JCM 10045 / NBRC 100440) (Methanococcus jannaschii).